We begin with the raw amino-acid sequence, 101 residues long: Citrate lyase acyl carrier protein (101 aa).

Serine 14 bears the O-(phosphoribosyl dephospho-coenzyme A)serine mark.

This sequence belongs to the CitD family. Oligomer with a subunit composition of (alpha,beta,gamma)6.

Its subcellular location is the cytoplasm. Its function is as follows. Covalent carrier of the coenzyme of citrate lyase. The chain is Citrate lyase acyl carrier protein from Lacticaseibacillus casei (strain BL23) (Lactobacillus casei).